Reading from the N-terminus, the 301-residue chain is Zinc finger protein LEE1 (301 aa).

A disordered region spans residues 1–25 (MDAFENMSVSNHPGGNARRNSQSAN). Residues 7-25 (MSVSNHPGGNARRNSQSAN) are compositionally biased toward polar residues. Phosphoserine is present on residues Ser21 and Ser30. 2 consecutive C3H1-type zinc fingers follow at residues 87 to 114 (DYSH…HSPD) and 123 to 145 (PCKY…HVLP). Ser282 carries the post-translational modification Phosphoserine.

The polypeptide is Zinc finger protein LEE1 (LEE1) (Saccharomyces cerevisiae (strain ATCC 204508 / S288c) (Baker's yeast)).